The following is a 229-amino-acid chain: Aminopyrimidine aminohydrolase (229 aa).

Position 44 (aspartate 44) interacts with substrate. Catalysis depends on cysteine 137, which acts as the Nucleophile. Substrate is bound by residues tyrosine 141 and tyrosine 167. Catalysis depends on glutamate 208, which acts as the Proton donor.

The protein belongs to the TenA family. As to quaternary structure, homotetramer.

It catalyses the reaction 4-amino-5-aminomethyl-2-methylpyrimidine + H2O = 4-amino-5-hydroxymethyl-2-methylpyrimidine + NH4(+). The enzyme catalyses thiamine + H2O = 5-(2-hydroxyethyl)-4-methylthiazole + 4-amino-5-hydroxymethyl-2-methylpyrimidine + H(+). It participates in cofactor biosynthesis; thiamine diphosphate biosynthesis. In terms of biological role, catalyzes an amino-pyrimidine hydrolysis reaction at the C5' of the pyrimidine moiety of thiamine compounds, a reaction that is part of a thiamine salvage pathway. Thus, catalyzes the conversion of 4-amino-5-aminomethyl-2-methylpyrimidine to 4-amino-5-hydroxymethyl-2-methylpyrimidine (HMP). Is also able to catalyze the hydrolytic cleavage of thiamine; however, this thiaminase activity may not be physiologically relevant. Therefore, is probably involved in the regeneration of the thiamine pyrimidine from thiamine degraded products present in the environment, rather than in thiamine degradation. The chain is Aminopyrimidine aminohydrolase from Staphylococcus aureus (strain MRSA252).